We begin with the raw amino-acid sequence, 430 residues long: Proteasome-activating nucleotidase (430 aa).

The stretch at 9–89 (TELKKEKKAF…LRRELDRMRV (81 aa)) forms a coiled coil. Residues 214–219 (GTGKTL) and H353 contribute to the ATP site. A docks into pockets in the proteasome alpha-ring to cause gate opening region spans residues 428-430 (LYR).

The protein belongs to the AAA ATPase family. Homohexamer. The hexameric complex has a two-ring architecture resembling a top hat that caps the 20S proteasome core at one or both ends. Alone, can form a complex composed of two stacked hexameric rings in vitro. Upon ATP-binding, the C-terminus of PAN interacts with the alpha-rings of the proteasome core by binding to the intersubunit pockets.

The protein localises to the cytoplasm. ATPase activity is inhibited by EDTA, N-ethylmaleimide (NEM) and p-chloromercuriphenyl-sulfonic acid (PCMS) in vitro. Functionally, ATPase which is responsible for recognizing, binding, unfolding and translocation of substrate proteins into the archaeal 20S proteasome core particle. Is essential for opening the gate of the 20S proteasome via an interaction with its C-terminus, thereby allowing substrate entry and access to the site of proteolysis. Thus, the C-termini of the proteasomal ATPase function like a 'key in a lock' to induce gate opening and therefore regulate proteolysis. Unfolding activity requires energy from ATP hydrolysis, whereas ATP binding alone promotes ATPase-20S proteasome association which triggers gate opening, and supports translocation of unfolded substrates. In addition to ATP, is able to cleave other nucleotide triphosphates such as CTP, GTP and UTP, but hydrolysis of these other nucleotides is less effective in promoting proteolysis than ATP. Moreover, PAN by itself can function as a chaperone in vitro. The chain is Proteasome-activating nucleotidase from Methanocaldococcus jannaschii (strain ATCC 43067 / DSM 2661 / JAL-1 / JCM 10045 / NBRC 100440) (Methanococcus jannaschii).